The primary structure comprises 208 residues: Recombination protein RecR (208 aa).

Residues 60–75 (CKVCHNICDDEVCSIC) form a C4-type zinc finger. The Toprim domain maps to 83–178 (SLVCVVENIK…RISVIARGVS (96 aa)).

Belongs to the RecR family.

May play a role in DNA repair. It seems to be involved in an RecBC-independent recombinational process of DNA repair. It may act with RecF and RecO. This Parabacteroides distasonis (strain ATCC 8503 / DSM 20701 / CIP 104284 / JCM 5825 / NCTC 11152) protein is Recombination protein RecR.